Here is a 428-residue protein sequence, read N- to C-terminus: Endoplasmic reticulum junction formation protein lunapark (428 aa).

G2 is lipidated: N-myristoyl glycine. Residues 2–45 are Cytoplasmic-facing; the sequence is GGLFSRWRTKPSTVEVLESIDKEIQALEEFREKNQRLQKLWVGR. Residues 16-41 are a coiled coil; sequence EVLESIDKEIQALEEFREKNQRLQKL. Residues 46–66 traverse the membrane as a helical segment; that stretch reads LILYSSVLYLFTCLIVYLWYL. The Lumenal portion of the chain corresponds to 67–77; that stretch reads PDEFTARLAMT. A helical membrane pass occupies residues 78-98; sequence LPFFAFPLIIWSIRTVIIFFF. Over 99-428 the chain is Cytoplasmic; that stretch reads SKRTERNNEA…ELSGESLTAE (330 aa). The stretch at 102–128 forms a coiled coil; it reads TERNNEALDDLKSQRKKILEEVMEKET. Phosphoserine occurs at positions 114, 153, 177, 182, and 194. Residues 143–247 form a disordered region; it reads SKKAKECEPP…HPPGPPLARP (105 aa). Over residues 185–198 the composition is skewed to pro residues; the sequence is QGPPPQVPVSPGPP. Phosphothreonine occurs at positions 211 and 213. S217 and S227 each carry phosphoserine. Residues 276-301 form a C4-type; plays a role in ER morphology zinc finger; that stretch reads CQQCFSHNGMALKEEFEYIAFRCAYC. 3 positions are modified to phosphoserine: S321, S353, and S384. The tract at residues 356-428 is disordered; sequence HDVLDDNTEQ…ELSGESLTAE (73 aa). Positions 386 to 401 are enriched in acidic residues; the sequence is SEEPEEKQETENEEAS. A Phosphoserine modification is found at S414.

Belongs to the lunapark family. As to quaternary structure, homodimer; homodimerization requires the C4-type zinc finger motif and decreases during mitosis in a phosphorylation-dependent manner. In terms of processing, myristoylated; myristoylation is necessary for the endoplasmic reticulum (ER) three-way ER tubular junction formation, but is not required neither for membrane translocation, membrane topology formation, nor for the specific localization to ER membranes. Post-translationally, phosphorylated. Phosphorylation occurs at Ser-177, Ser-182, Ser-217, Ser-227, Ser-321 and Ser-384 during interphase. Phosphorylation occurs at Ser-114, Ser-153, Ser-194, Thr-211 and Ser-353 during mitosis; these phosphorylations reduce both its homodimerization and the ER three-way tubular junction formation. Subject to proteasomal degradation following phosphorylation during mitosis. In terms of tissue distribution, expressed in neural precursor cells, where it is detected at the growth-cone-like structure and branching sites of neurite-like processes.

Its subcellular location is the endoplasmic reticulum membrane. Endoplasmic reticulum (ER)-shaping membrane protein that plays a role in determining ER morphology. Involved in the stabilization of nascent three-way ER tubular junctions within the ER network. May also play a role as a curvature-stabilizing protein within the three-way ER tubular junction network. May be involved in limb development. Is involved in central nervous system development. This Homo sapiens (Human) protein is Endoplasmic reticulum junction formation protein lunapark.